A 255-amino-acid chain; its full sequence is MSKAFLPTILEQKEKEVAQLVMEDLQPLRQTYRLYDFLKSNQNKLQIISEVKKASPSMGDINLDVDIVAQAKTYEENGAAMISVLTDEVFFKGDISYLKEISTQVAIPTLAKDFIIDEKQIVRSRNAGATVILLIVAALPEARLKELYDFATSLGLEVLVETHNLPELEVAHRIGAEIIGVNNRNLMTFETDINTSLELSTHFKDKPVYISESAIFTGQDAALVAPYFNGILVGTALMTADNVAKKVKELQIDKG.

This sequence belongs to the TrpC family.

It catalyses the reaction 1-(2-carboxyphenylamino)-1-deoxy-D-ribulose 5-phosphate + H(+) = (1S,2R)-1-C-(indol-3-yl)glycerol 3-phosphate + CO2 + H2O. The protein operates within amino-acid biosynthesis; L-tryptophan biosynthesis; L-tryptophan from chorismate: step 4/5. This is Indole-3-glycerol phosphate synthase from Streptococcus thermophilus (strain CNRZ 1066).